The sequence spans 62 residues: DNA gyrase inhibitor YacG (62 aa).

C8, C11, C27, and C31 together coordinate Zn(2+).

Belongs to the DNA gyrase inhibitor YacG family. As to quaternary structure, interacts with GyrB. Zn(2+) is required as a cofactor.

In terms of biological role, inhibits all the catalytic activities of DNA gyrase by preventing its interaction with DNA. Acts by binding directly to the C-terminal domain of GyrB, which probably disrupts DNA binding by the gyrase. The sequence is that of DNA gyrase inhibitor YacG from Actinobacillus pleuropneumoniae serotype 5b (strain L20).